Consider the following 308-residue polypeptide: 4-hydroxy-tetrahydrodipicolinate synthase (308 aa).

Threonine 56 is a binding site for pyruvate. Catalysis depends on tyrosine 144, which acts as the Proton donor/acceptor. Lysine 172 serves as the catalytic Schiff-base intermediate with substrate. Valine 212 contacts pyruvate.

The protein belongs to the DapA family. Homotetramer; dimer of dimers.

It is found in the cytoplasm. The enzyme catalyses L-aspartate 4-semialdehyde + pyruvate = (2S,4S)-4-hydroxy-2,3,4,5-tetrahydrodipicolinate + H2O + H(+). Its pathway is amino-acid biosynthesis; L-lysine biosynthesis via DAP pathway; (S)-tetrahydrodipicolinate from L-aspartate: step 3/4. Catalyzes the condensation of (S)-aspartate-beta-semialdehyde [(S)-ASA] and pyruvate to 4-hydroxy-tetrahydrodipicolinate (HTPA). The polypeptide is 4-hydroxy-tetrahydrodipicolinate synthase (Kineococcus radiotolerans (strain ATCC BAA-149 / DSM 14245 / SRS30216)).